Reading from the N-terminus, the 528-residue chain is Nucleobase-ascorbate transporter 5 (528 aa).

The tract at residues 1-20 is disordered; the sequence is MSAPKSGGDPLPHPPKEQLP. The next 12 helical transmembrane spans lie at 35-55, 71-91, 93-113, 133-153, 159-179, 181-201, 219-239, 285-305, 367-387, 390-410, 418-438, and 460-479; these read AVLL…LIPS, LIQT…VFGT, LPAV…IMLS, TQGA…SGLW, FLSP…LYEL, FPGV…LILI, FAVI…TLGG, FAMM…FIAV, AGFM…ASIP, IIAA…LSLL, FRTL…PQYF, and MVNV…AYLL.

The protein belongs to the nucleobase:cation symporter-2 (NCS2) (TC 2.A.40) family. Weakly expressed in the vasculature of developing leaves.

It localises to the membrane. This Arabidopsis thaliana (Mouse-ear cress) protein is Nucleobase-ascorbate transporter 5 (NAT5).